The primary structure comprises 329 residues: Beta-ketoacyl-[acyl-carrier-protein] synthase III (329 aa).

Active-site residues include cysteine 123 and histidine 256. Residues glutamine 257–arginine 261 form an ACP-binding region. The active site involves asparagine 286.

This sequence belongs to the thiolase-like superfamily. FabH family. In terms of assembly, homodimer.

The protein resides in the cytoplasm. The enzyme catalyses malonyl-[ACP] + acetyl-CoA + H(+) = 3-oxobutanoyl-[ACP] + CO2 + CoA. It functions in the pathway lipid metabolism; fatty acid biosynthesis. Catalyzes the condensation reaction of fatty acid synthesis by the addition to an acyl acceptor of two carbons from malonyl-ACP. Catalyzes the first condensation reaction which initiates fatty acid synthesis and may therefore play a role in governing the total rate of fatty acid production. Possesses both acetoacetyl-ACP synthase and acetyl transacylase activities. Its substrate specificity determines the biosynthesis of branched-chain and/or straight-chain of fatty acids. The chain is Beta-ketoacyl-[acyl-carrier-protein] synthase III from Burkholderia mallei (strain NCTC 10247).